The following is a 248-amino-acid chain: NAD(P)H-quinone oxidoreductase subunit K 1 (248 aa).

A propeptide spanning residues methionine 1–serine 2 is cleaved from the precursor. Cysteine 62, cysteine 63, cysteine 127, and cysteine 158 together coordinate [4Fe-4S] cluster. The interval methionine 228–glycine 248 is disordered. Positions leucine 236 to glycine 248 are enriched in polar residues.

This sequence belongs to the complex I 20 kDa subunit family. In terms of assembly, NDH-1 can be composed of about 15 different subunits; different subcomplexes with different compositions have been identified which probably have different functions. [4Fe-4S] cluster is required as a cofactor.

The protein localises to the cellular thylakoid membrane. It catalyses the reaction a plastoquinone + NADH + (n+1) H(+)(in) = a plastoquinol + NAD(+) + n H(+)(out). The enzyme catalyses a plastoquinone + NADPH + (n+1) H(+)(in) = a plastoquinol + NADP(+) + n H(+)(out). NDH-1 shuttles electrons from an unknown electron donor, via FMN and iron-sulfur (Fe-S) centers, to quinones in the respiratory and/or the photosynthetic chain. The immediate electron acceptor for the enzyme in this species is believed to be plastoquinone. Couples the redox reaction to proton translocation, and thus conserves the redox energy in a proton gradient. Cyanobacterial NDH-1 also plays a role in inorganic carbon-concentration. The protein is NAD(P)H-quinone oxidoreductase subunit K 1 of Synechocystis sp. (strain ATCC 27184 / PCC 6803 / Kazusa).